Here is a 133-residue protein sequence, read N- to C-terminus: ATP synthase epsilon chain, chloroplastic (133 aa).

The protein belongs to the ATPase epsilon chain family. As to quaternary structure, F-type ATPases have 2 components, CF(1) - the catalytic core - and CF(0) - the membrane proton channel. CF(1) has five subunits: alpha(3), beta(3), gamma(1), delta(1), epsilon(1). CF(0) has three main subunits: a, b and c.

It is found in the plastid. The protein localises to the chloroplast thylakoid membrane. Its function is as follows. Produces ATP from ADP in the presence of a proton gradient across the membrane. The chain is ATP synthase epsilon chain, chloroplastic from Lotus japonicus (Lotus corniculatus var. japonicus).